The following is a 204-amino-acid chain: Matrix-remodeling-associated protein 7 (204 aa).

Residues 7-27 (LLAALPALATALALLLAWLLV) traverse the membrane as a helical segment. A disordered region spans residues 32–148 (AASPEPARAP…FSFKYSPGKL (117 aa)). Residues 38–47 (ARAPPEPAPP) show a composition bias toward pro residues. Positions 63-103 (EPAASPAGPEEPGEPAGLGELGEPAGPGEPEGPGDPAAAPA) are enriched in low complexity. The segment covering 110–126 (VEARQEEEQDLDGEKGP) has biased composition (basic and acidic residues). Position 191 is a phosphoserine (S191).

It localises to the membrane. This is Matrix-remodeling-associated protein 7 (MXRA7) from Homo sapiens (Human).